We begin with the raw amino-acid sequence, 856 residues long: DNA mismatch repair protein MutS (856 aa).

600-607 (GPNMSGKS) provides a ligand contact to ATP.

This sequence belongs to the DNA mismatch repair MutS family.

Its function is as follows. This protein is involved in the repair of mismatches in DNA. It is possible that it carries out the mismatch recognition step. This protein has a weak ATPase activity. The sequence is that of DNA mismatch repair protein MutS from Lactobacillus acidophilus (strain ATCC 700396 / NCK56 / N2 / NCFM).